The sequence spans 116 residues: Large ribosomal subunit protein uL18 (116 aa).

The protein belongs to the universal ribosomal protein uL18 family. As to quaternary structure, part of the 50S ribosomal subunit; part of the 5S rRNA/L5/L18/L25 subcomplex. Contacts the 5S and 23S rRNAs.

In terms of biological role, this is one of the proteins that bind and probably mediate the attachment of the 5S RNA into the large ribosomal subunit, where it forms part of the central protuberance. The protein is Large ribosomal subunit protein uL18 of Pseudoalteromonas translucida (strain TAC 125).